We begin with the raw amino-acid sequence, 145 residues long: Arginine repressor (145 aa).

Belongs to the ArgR family.

It localises to the cytoplasm. The protein operates within amino-acid biosynthesis; L-arginine biosynthesis [regulation]. Regulates arginine biosynthesis genes. The polypeptide is Arginine repressor (Streptococcus pyogenes serotype M3 (strain ATCC BAA-595 / MGAS315)).